The chain runs to 195 residues: Elongation factor Ts (195 aa).

The involved in Mg(2+) ion dislocation from EF-Tu stretch occupies residues 81-84 (TDFV).

Belongs to the EF-Ts family.

It is found in the cytoplasm. Associates with the EF-Tu.GDP complex and induces the exchange of GDP to GTP. It remains bound to the aminoacyl-tRNA.EF-Tu.GTP complex up to the GTP hydrolysis stage on the ribosome. This Rubrobacter xylanophilus (strain DSM 9941 / JCM 11954 / NBRC 16129 / PRD-1) protein is Elongation factor Ts.